An 865-amino-acid chain; its full sequence is MLEEYRKHVAERAAEGIAPKPLDANQMAALVELLKNPPAGEEEFLLDLLTNRVPPGVDEAAYVKAGFLAAIAKGEAKSPLLTPEKAIELLGTMQGGYNIHPLIDALDDAKLAPIAAKALSHTLLMFDNFYDVEEKAKAGNEYAKQVMQSWADAEWFLNRPALAEKLTVTVFKVTGETNTDDLSPAPDAWSRPDIPLHALAMLKNAREGIEPDQPGVVGPIKQIEALQQKGFPLAYVGDVVGTGSSRKSATNSVLWFMGDDIPHVPNKRGGGLCLGGKIAPIFFNTMEDAGALPIEVDVSNLNMGDVIDVYPYKGEVRNHETGELLATFELKTDVLIDEVRAGGRIPLIIGRGLTTKAREALGLPHSDVFRQAKDVAESDRGFSLAQKMVGRACGVKGIRPGAYCEPKMTSVGSQDTTGPMTRDELKDLACLGFSADLVMQSFCHTAAYPKPVDVNTHHTLPDFIMNRGGVSLRPGDGVIHSWLNRMLLPDTVGTGGDSHTRFPIGISFPAGSGLVAFAAATGVMPLDMPESVLVRFKGKMQPGITLRDLVHAIPLYAIKQGLLTVEKKGKKNIFSGRILEIEGLPDLKVEQAFELTDASAERSAAGCTIKLNKEPIIEYLNSNIVLLKWMIAEGYGDRRTLERRIQGMEKWLANPELLEADADAEYAAVIDIDLADIKEPILCAPNDPDDARPLSAVQGEKIDEVFIGSCMTNIGHFRAAGKLLDAHKGQLPTRLWVAPPTRMDAAQLTEEGYYSVFGKSGARIEIPGCSLCMGNQARVADGATVVSTSTRNFPNRLGTGANVFLASAELAAVAALIGKLPTPEEYQTYVAQVDKTAVDTYRYLNFNQLSQYTEKADGVIFQTAV.

Residues Arg191, 244–246 (SSR), 414–416 (QDT), and Ser498 contribute to the substrate site. Residues Cys710, Cys769, and Cys772 each coordinate [4Fe-4S] cluster. Substrate is bound by residues Arg791 and Arg796.

This sequence belongs to the aconitase/IPM isomerase family. As to quaternary structure, monomer. AcnB can also form a homodimer. The monomer-homodimer transition is dependent on iron availability and the carboxymethylation of C-273 inhibits the dimer formation. It depends on [4Fe-4S] cluster as a cofactor.

It catalyses the reaction citrate = D-threo-isocitrate. The catalysed reaction is (2S,3R)-3-hydroxybutane-1,2,3-tricarboxylate = 2-methyl-cis-aconitate + H2O. Its pathway is organic acid metabolism; propanoate degradation. It functions in the pathway carbohydrate metabolism; tricarboxylic acid cycle; isocitrate from oxaloacetate: step 2/2. Its function is as follows. Involved in the catabolism of short chain fatty acids (SCFA) via the tricarboxylic acid (TCA)(acetyl degradation route) and the 2-methylcitrate cycle I (propionate degradation route). Catalyzes the reversible isomerization of citrate to isocitrate via cis-aconitate. Also catalyzes the hydration of 2-methyl-cis-aconitate to yield (2R,3S)-2-methylisocitrate. The apo form of AcnB functions as a RNA-binding regulatory protein. During oxidative stress inactive AcnB apo-enzyme without iron sulfur clusters binds the acnB mRNA 3' UTRs (untranslated regions), stabilizes acnB mRNA and increases AcnB synthesis, thus mediating a post-transcriptional positive autoregulatory switch. AcnB also decreases the stability of the sodA transcript. The polypeptide is Aconitate hydratase B (Escherichia coli (strain K12)).